Consider the following 347-residue polypeptide: Inositol 2-dehydrogenase (347 aa).

The protein belongs to the Gfo/Idh/MocA family. In terms of assembly, homotetramer.

It carries out the reaction myo-inositol + NAD(+) = scyllo-inosose + NADH + H(+). Functionally, involved in the oxidation of myo-inositol (MI) to 2-keto-myo-inositol (2KMI or 2-inosose). This is Inositol 2-dehydrogenase from Rubrobacter xylanophilus (strain DSM 9941 / JCM 11954 / NBRC 16129 / PRD-1).